A 122-amino-acid chain; its full sequence is Large ribosomal subunit protein uL14c (122 aa).

This sequence belongs to the universal ribosomal protein uL14 family. Part of the 50S ribosomal subunit.

It localises to the plastid. The protein resides in the chloroplast. Binds to 23S rRNA. This is Large ribosomal subunit protein uL14c from Gracilaria tenuistipitata var. liui (Red alga).